The sequence spans 465 residues: Methylenetetrahydrofolate--tRNA-(uracil-5-)-methyltransferase TrmFO (465 aa).

11–16 (GGGLAG) provides a ligand contact to FAD.

This sequence belongs to the MnmG family. TrmFO subfamily. The cofactor is FAD.

The protein resides in the cytoplasm. The catalysed reaction is uridine(54) in tRNA + (6R)-5,10-methylene-5,6,7,8-tetrahydrofolate + NADH + H(+) = 5-methyluridine(54) in tRNA + (6S)-5,6,7,8-tetrahydrofolate + NAD(+). The enzyme catalyses uridine(54) in tRNA + (6R)-5,10-methylene-5,6,7,8-tetrahydrofolate + NADPH + H(+) = 5-methyluridine(54) in tRNA + (6S)-5,6,7,8-tetrahydrofolate + NADP(+). Its function is as follows. Catalyzes the folate-dependent formation of 5-methyl-uridine at position 54 (M-5-U54) in all tRNAs. This is Methylenetetrahydrofolate--tRNA-(uracil-5-)-methyltransferase TrmFO from Acaryochloris marina (strain MBIC 11017).